The primary structure comprises 1171 residues: ATP-dependent helicase/deoxyribonuclease subunit B (1171 aa).

A UvrD-like helicase ATP-binding domain is found at 1 to 343 (MSLRFVIGRA…LVAEENYRYR (343 aa)). 8-15 (GRAGSGKS) lines the ATP pocket. Positions 281–587 (MEQPRFHSPA…QFANIPPSLD (307 aa)) constitute a UvrD-like helicase C-terminal domain. The [4Fe-4S] cluster site is built by Cys805, Cys1129, Cys1132, and Cys1138.

It belongs to the helicase family. AddB/RexB type 1 subfamily. In terms of assembly, heterodimer of AddA and AddB. Mg(2+) serves as cofactor. The cofactor is [4Fe-4S] cluster.

The heterodimer acts as both an ATP-dependent DNA helicase and an ATP-dependent, dual-direction single-stranded exonuclease. Recognizes the chi site generating a DNA molecule suitable for the initiation of homologous recombination. The AddB subunit has 5' -&gt; 3' nuclease activity but not helicase activity. The polypeptide is ATP-dependent helicase/deoxyribonuclease subunit B (Bacillus anthracis).